A 900-amino-acid chain; its full sequence is Nonribosomal peptide synthetase AMT10 (900 aa).

An adenylation region spans residues Lys284 to Arg686. The 77-residue stretch at Glu824 to Asp900 folds into the Carrier domain. Ser861 bears the O-(pantetheine 4'-phosphoryl)serine mark.

This sequence belongs to the NRP synthetase family.

It functions in the pathway mycotoxin biosynthesis. Functionally, nonribosomal peptide synthetase; part of the gene clusters that mediate the biosynthesis of AM-toxins, host-selective toxins (HSTs) causing Alternaria blotch on apple, a worldwide distributed disease. AM-toxins are cyclic depsipeptides containing the 3 residues 2-hydroxy-isovaleric acid (2-HIV), dehydroalanine, L-alanine which are common for all 3 AM-toxins I to III. The fourth precursor is L-alpha-amino-methoxyphenyl-valeric acid (L-Amv) for AM-toxin I, L-alpha-amino-phenyl-valeric acid (L-Apv) for AM-toxin II, and L-alpha-amino-hydroxyphenyl-valeric acid (L-Ahv) for AM-toxin III. AM-toxins have two target sites for affecting susceptible apple cells; they cause invagination of the plasma membrane and electrolyte loss and chloroplast disorganization. The non-ribosomal peptide synthetase AMT1 contains 4 catalytic modules and is responsible for activation of each residue in AM-toxin. The aldo-keto reductase AMT2 catalyzes the conversion of 2-keto-isovaleric acid (2-KIV) to 2-hydroxy-isovaleric acid (2-HIV), one of the precursor residues incorporated by AMT1 during AM-toxin biosynthesis, by reduction of its ketone to an alcohol. The cytochrome P450 monooxygenase AMT3 and the thioesterase AMT4 are also important for AM-toxin production, but their exact function within the AM-toxin biosynthesis are not known yet. Up to 21 proteins (including AMT1 to AMT4) are predicted to be involved in AM-toxin biosynthesis since their expression ishighly up-regulated in AM-toxin-producing cultures. This Alternaria alternata (Alternaria rot fungus) protein is Nonribosomal peptide synthetase AMT10.